A 608-amino-acid polypeptide reads, in one-letter code: Glutamine--fructose-6-phosphate aminotransferase [isomerizing] (608 aa).

Cysteine 2 (nucleophile; for GATase activity) is an active-site residue. Positions 2 to 217 (CGIVGIVGTQ…DGDCAIVTRD (216 aa)) constitute a Glutamine amidotransferase type-2 domain. SIS domains lie at 281-422 (ADKA…ARGT) and 456-598 (LSRD…VDQP). The For Fru-6P isomerization activity role is filled by lysine 603.

In terms of assembly, homodimer.

It localises to the cytoplasm. It catalyses the reaction D-fructose 6-phosphate + L-glutamine = D-glucosamine 6-phosphate + L-glutamate. In terms of biological role, catalyzes the first step in hexosamine metabolism, converting fructose-6P into glucosamine-6P using glutamine as a nitrogen source. This Agrobacterium fabrum (strain C58 / ATCC 33970) (Agrobacterium tumefaciens (strain C58)) protein is Glutamine--fructose-6-phosphate aminotransferase [isomerizing].